Here is a 103-residue protein sequence, read N- to C-terminus: Ghrelin (103 aa).

An N-terminal signal peptide occupies residues 1–26; the sequence is MPLRRRASHMFVLLCALSLCVESVKG. Positions 27–51 are disordered; the sequence is GTSFLSPAQKPQGRRPPRMGRRDVA. A lipid anchor (O-decanoyl serine; alternate) is attached at S29. A lipid anchor (O-hexanoyl serine; alternate) is attached at S29. S29 is lipidated: O-octanoyl serine; alternate. Glutamine amide is present on Q38. M45 bears the Methionine amide mark. Residues 49-103 constitute a propeptide, removed in mature form; the sequence is DVAEPEIPVIKEDDQFMMSAPFELSVSLSEAEYEKYGPVLQKVLVNLLGDSPLEF.

This sequence belongs to the motilin family. Post-translationally, O-octanoylated by GOAT/MBOAT4. O-octanoylation or O-decanoylation is essential for activity. The O-decanoylated form differs in the length of the carbon backbone of the carboxylic acid forming an ester bond with Ser-29. Expressed in the telencephalon, hypothalamus, pituitary, intestine, liver, spleen and gill, with expression strongest in the intestine.

The protein resides in the secreted. Its function is as follows. Ligand for growth hormone secretagogue receptor type 1 (GHSR). Induces the release of growth hormone from the pituitary. Induces adiposity and stimulates gastric acid secretion. Involved in growth regulation. Has an appetite-stimulating effect. The polypeptide is Ghrelin (ghrl) (Carassius auratus (Goldfish)).